A 363-amino-acid chain; its full sequence is UDP-N-acetylglucosamine--N-acetylmuramyl-(pentapeptide) pyrophosphoryl-undecaprenol N-acetylglucosamine transferase (363 aa).

Residues 10–12, N124, S195, I250, and Q295 each bind UDP-N-acetyl-alpha-D-glucosamine; that span reads TGG.

It belongs to the glycosyltransferase 28 family. MurG subfamily.

It localises to the cell membrane. The enzyme catalyses di-trans,octa-cis-undecaprenyl diphospho-N-acetyl-alpha-D-muramoyl-L-alanyl-D-glutamyl-meso-2,6-diaminopimeloyl-D-alanyl-D-alanine + UDP-N-acetyl-alpha-D-glucosamine = di-trans,octa-cis-undecaprenyl diphospho-[N-acetyl-alpha-D-glucosaminyl-(1-&gt;4)]-N-acetyl-alpha-D-muramoyl-L-alanyl-D-glutamyl-meso-2,6-diaminopimeloyl-D-alanyl-D-alanine + UDP + H(+). Its pathway is cell wall biogenesis; peptidoglycan biosynthesis. Its function is as follows. Cell wall formation. Catalyzes the transfer of a GlcNAc subunit on undecaprenyl-pyrophosphoryl-MurNAc-pentapeptide (lipid intermediate I) to form undecaprenyl-pyrophosphoryl-MurNAc-(pentapeptide)GlcNAc (lipid intermediate II). The sequence is that of UDP-N-acetylglucosamine--N-acetylmuramyl-(pentapeptide) pyrophosphoryl-undecaprenol N-acetylglucosamine transferase from Listeria monocytogenes serovar 1/2a (strain ATCC BAA-679 / EGD-e).